Consider the following 404-residue polypeptide: Zinc metalloprotease Rip1 (404 aa).

A helical transmembrane segment spans residues 1 to 21 (MMFVTGIVLFALAILISVALH). Position 21 (His21) interacts with Zn(2+). The active site involves Glu22. His25 is a Zn(2+) binding site. Residues 104-124 (PGMNLAICLVLIYAIALVWGL) traverse the membrane as a helical segment. One can recognise a PDZ domain in the interval 121–203 (VWGLPNLHPP…SVPIVVERDG (83 aa)). Asp202 lines the Zn(2+) pocket. Transmembrane regions (helical) follow at residues 313 to 333 (LWVA…TINL) and 373 to 393 (LLPA…LTVT).

Belongs to the peptidase M50B family. Requires Zn(2+) as cofactor.

It localises to the cell membrane. Functionally, a probable intramembrane site-2 protease (S2P) that cleaves type-2 transmembrane proteins within their membrane-spanning domains. Cleaves PbpB (PBP3, FtsI); cleavage is inhibited by Wag31-PbpB interaction. Probably also cleaves anti-sigma factors RskA, RslA and RsmA. Regulated intramembrane proteolysis (RIP) occurs when an extracytoplasmic signal (possibly oxidative stress) triggers a concerted proteolytic cascade to transmit information and elicit cellular responses. The membrane-spanning regulatory substrate protein (includes anti-sigma factors RskA, RslA, RsmA, and PbpB in M.tuberculosis) is first cut extracytoplasmically (site-1 protease, S1P), then within the membrane itself (site-2 protease, S2P, this entry), while cytoplasmic proteases finish degrading the regulatory protein, liberating the effector protein (ECF sigma factors SigK, SigL and SigM). This is Zinc metalloprotease Rip1 (rip1) from Mycobacterium bovis (strain BCG / Pasteur 1173P2).